Reading from the N-terminus, the 381-residue chain is MNYDVVIARYGEIGLKSSKVRARFERKLVKNIKAAIDCEVDRNQGRIYIFPKNYGECLENLNKVFGVVSYSPAVSTYGNYEDIEKTLGEYVDNLVDDGFIGKDTRFAIKCRRVGNHDFTSQEMAAFCGSVVVKKVGCPVDLTNPELKIYVEVRDDEAFIYHEKIDGPGGLPLGTQGKVVVLVSSGIDSPVAAYLMMKRGCEVIALHCDNAPFTGPKVHENFDKIIDQLQSYAKGVPITKKVVKYGEYLQQAKDCAPEKMTCVLCKSGMYKIAEKLAHKYGASAIVDGSSVGQVASQTLSNILATRHGVDMPILSPLIGLDKLEITRIAEDIGTFEISKLDDGGCHAVPKYPETKADVDRVEEACRAMNQKEAIEKAFDSID.

Positions G55–K163 constitute a THUMP domain. ATP contacts are provided by residues L181–V182, K265, G287, and Q296.

This sequence belongs to the ThiI family.

The protein resides in the cytoplasm. The enzyme catalyses [ThiI sulfur-carrier protein]-S-sulfanyl-L-cysteine + a uridine in tRNA + 2 reduced [2Fe-2S]-[ferredoxin] + ATP + H(+) = [ThiI sulfur-carrier protein]-L-cysteine + a 4-thiouridine in tRNA + 2 oxidized [2Fe-2S]-[ferredoxin] + AMP + diphosphate. It carries out the reaction [ThiS sulfur-carrier protein]-C-terminal Gly-Gly-AMP + S-sulfanyl-L-cysteinyl-[cysteine desulfurase] + AH2 = [ThiS sulfur-carrier protein]-C-terminal-Gly-aminoethanethioate + L-cysteinyl-[cysteine desulfurase] + A + AMP + 2 H(+). It functions in the pathway cofactor biosynthesis; thiamine diphosphate biosynthesis. Functionally, catalyzes the ATP-dependent transfer of a sulfur to tRNA to produce 4-thiouridine in position 8 of tRNAs, which functions as a near-UV photosensor. Also catalyzes the transfer of sulfur to the sulfur carrier protein ThiS, forming ThiS-thiocarboxylate. This is a step in the synthesis of thiazole, in the thiamine biosynthesis pathway. The sulfur is donated as persulfide by IscS. This Methanobrevibacter smithii (strain ATCC 35061 / DSM 861 / OCM 144 / PS) protein is Probable tRNA sulfurtransferase.